Consider the following 366-residue polypeptide: Protein sigma-NS (366 aa).

Positions 1–11 (MASSLRAAISK) are important for ssRNA-binding and formation of complexes.

This sequence belongs to the orthoreovirus sigma-NS protein family. As to quaternary structure, homooligomer; in presence of RNA. Interacts with protein mu-NS; this interaction allows the localization of sigma-NS to the viral factories. Interacts with host G3BP1 (via C-terminus); this interaction induces the relocalization of G3BP1 and other SG proteins to the viral factories periphery.

Its subcellular location is the host cytoplasm. Functionally, protein that binds to ssRNA and participates with protein mu-NS in forming the matrix of viral factories, which are large inclusions in the host cytoplasm where replication intermediates are assembled and viral RNA replication takes place. Plays a role in the inhibition of the integrated stress response (ISR) to escape from host cell translational shutoff. Participates in the disruption of stress granules (SG) through its association with host G3BP1 and mu-NS. The polypeptide is Protein sigma-NS (S3) (Mammalia (T3D)).